The following is a 765-amino-acid chain: Protein transport protein Sec23A (765 aa).

4 residues coordinate Zn(2+): C61, C66, C85, and C88. One copy of the Gelsolin-like repeat lies at 632–718 (PEPVLLDSSS…EHGGSQARFL (87 aa)).

It belongs to the SEC23/SEC24 family. SEC23 subfamily. COPII is composed of at least five proteins: the Sec23/24 complex, the Sec13/31 complex and Sar1.

The protein resides in the cytoplasmic vesicle. Its subcellular location is the COPII-coated vesicle membrane. It is found in the endoplasmic reticulum membrane. It localises to the cytoplasm. The protein localises to the cytosol. Its function is as follows. Component of the coat protein complex II (COPII) which promotes the formation of transport vesicles from the endoplasmic reticulum (ER). The coat has two main functions, the physical deformation of the endoplasmic reticulum membrane into vesicles and the selection of cargo molecules for their transport to the Golgi complex. The polypeptide is Protein transport protein Sec23A (Xenopus tropicalis (Western clawed frog)).